The following is a 303-amino-acid chain: Monoglyceride lipase (303 aa).

Threonine 10 is modified (phosphothreonine). Tyrosine 58 bears the 3'-nitrotyrosine mark. The Nucleophile role is filled by serine 122. Residue serine 189 is modified to Phosphoserine. Catalysis depends on charge relay system residues aspartate 239 and histidine 269.

This sequence belongs to the AB hydrolase superfamily. Monoacylglycerol lipase family. As to quaternary structure, homodimer. Ubiquitous.

Its subcellular location is the cytoplasm. It localises to the cytosol. The protein resides in the membrane. The enzyme catalyses Hydrolyzes glycerol monoesters of long-chain fatty acids.. It carries out the reaction a 1-acylglycerol + H2O = glycerol + a fatty acid + H(+). The catalysed reaction is a 2-acylglycerol + H2O = glycerol + a fatty acid + H(+). It catalyses the reaction 2-(5Z,8Z,11Z,14Z-eicosatetraenoyl)-glycerol + H2O = glycerol + (5Z,8Z,11Z,14Z)-eicosatetraenoate + H(+). The enzyme catalyses 1-octanoylglycerol + H2O = octanoate + glycerol + H(+). It carries out the reaction 1-decanoylglycerol + H2O = decanoate + glycerol + H(+). The catalysed reaction is 1-dodecanoylglycerol + H2O = dodecanoate + glycerol + H(+). It catalyses the reaction 1-tetradecanoylglycerol + H2O = tetradecanoate + glycerol + H(+). The enzyme catalyses 2-hexadecanoylglycerol + H2O = glycerol + hexadecanoate + H(+). It carries out the reaction 1-(9Z-octadecenoyl)-glycerol + H2O = glycerol + (9Z)-octadecenoate + H(+). The catalysed reaction is 2-(9Z-octadecenoyl)-glycerol + H2O = glycerol + (9Z)-octadecenoate + H(+). It catalyses the reaction 2-(9Z,12Z-octadecadienoyl)-glycerol + H2O = (9Z,12Z)-octadecadienoate + glycerol + H(+). The enzyme catalyses 1-(5Z,8Z,11Z,14Z-eicosatetraenoyl)-glycerol + H2O = glycerol + (5Z,8Z,11Z,14Z)-eicosatetraenoate + H(+). It carries out the reaction 1-(9Z,12Z-octadecadienoyl)-glycerol + H2O = (9Z,12Z)-octadecadienoate + glycerol + H(+). The catalysed reaction is 1-hexadecanoylglycerol + H2O = glycerol + hexadecanoate + H(+). It catalyses the reaction 1-octadecanoylglycerol + H2O = octadecanoate + glycerol + H(+). The enzyme catalyses prostaglandin E2 1-glyceryl ester + H2O = prostaglandin E2 + glycerol + H(+). It carries out the reaction prostaglandin D2-1-glycerol ester + H2O = prostaglandin D2 + glycerol + H(+). The catalysed reaction is 2-glyceryl-15-deoxy-Delta(12,14)-prostaglandin J2 + H2O = 15-deoxy-Delta(12,14)-prostaglandin J2 + glycerol + H(+). It catalyses the reaction prostaglandin F2alpha 1-glyceryl ester + H2O = prostaglandin F2alpha + glycerol + H(+). It participates in glycerolipid metabolism; triacylglycerol degradation. Its function is as follows. Converts monoacylglycerides to free fatty acids and glycerol. Hydrolyzes the endocannabinoid 2-arachidonoylglycerol, and thereby contributes to the regulation of endocannabinoid signaling, nociperception and perception of pain. Regulates the levels of fatty acids that serve as signaling molecules and promote cancer cell migration, invasion and tumor growth. This chain is Monoglyceride lipase, found in Mus musculus (Mouse).